The chain runs to 127 residues: Aspartate 1-decarboxylase (127 aa).

Residue serine 25 is the Schiff-base intermediate with substrate; via pyruvic acid of the active site. Serine 25 bears the Pyruvic acid (Ser) mark. Position 57 (threonine 57) interacts with substrate. Tyrosine 58 functions as the Proton donor in the catalytic mechanism. 73 to 75 serves as a coordination point for substrate; that stretch reads GAA.

Belongs to the PanD family. As to quaternary structure, heterooctamer of four alpha and four beta subunits. Pyruvate is required as a cofactor. Post-translationally, is synthesized initially as an inactive proenzyme, which is activated by self-cleavage at a specific serine bond to produce a beta-subunit with a hydroxyl group at its C-terminus and an alpha-subunit with a pyruvoyl group at its N-terminus.

The protein localises to the cytoplasm. The catalysed reaction is L-aspartate + H(+) = beta-alanine + CO2. It functions in the pathway cofactor biosynthesis; (R)-pantothenate biosynthesis; beta-alanine from L-aspartate: step 1/1. In terms of biological role, catalyzes the pyruvoyl-dependent decarboxylation of aspartate to produce beta-alanine. The polypeptide is Aspartate 1-decarboxylase (Exiguobacterium sibiricum (strain DSM 17290 / CCUG 55495 / CIP 109462 / JCM 13490 / 255-15)).